Here is a 101-residue protein sequence, read N- to C-terminus: Ubiquitin-related modifier 1 (101 aa).

At G101 the chain carries 1-thioglycine. Residue G101 forms a Glycyl lysine isopeptide (Gly-Lys) (interchain with K-? in acceptor proteins) linkage.

It belongs to the URM1 family. Post-translationally, C-terminal thiocarboxylation occurs in 2 steps, it is first acyl-adenylated (-COAMP) via the hesA/moeB/thiF part of UBA4, then thiocarboxylated (-COSH) via the rhodanese domain of UBA4.

It localises to the cytoplasm. It participates in tRNA modification; 5-methoxycarbonylmethyl-2-thiouridine-tRNA biosynthesis. Functionally, acts as a sulfur carrier required for 2-thiolation of mcm(5)S(2)U at tRNA wobble positions of cytosolic tRNA(Lys), tRNA(Glu) and tRNA(Gln). Serves as sulfur donor in tRNA 2-thiolation reaction by being thiocarboxylated (-COSH) at its C-terminus by the MOCS3 homolog UBA4. The sulfur is then transferred to tRNA to form 2-thiolation of mcm(5)S(2)U. Prior mcm(5) tRNA modification by the elongator complex is required for 2-thiolation. Also acts as a ubiquitin-like protein (UBL) that is covalently conjugated via an isopeptide bond to lysine residues of target proteins such as AHP1. The thiocarboxylated form serves as substrate for conjugation and oxidative stress specifically induces the formation of UBL-protein conjugates. The chain is Ubiquitin-related modifier 1 from Scheffersomyces stipitis (strain ATCC 58785 / CBS 6054 / NBRC 10063 / NRRL Y-11545) (Yeast).